The following is a 121-amino-acid chain: uncharacterized protein (121 aa).

2 consecutive transmembrane segments (helical) span residues 16–36 (GFMV…GFAV) and 74–94 (LYIA…MKTI).

The protein localises to the cell membrane. This is an uncharacterized protein from Bacillus subtilis (strain 168).